We begin with the raw amino-acid sequence, 200 residues long: ATP-dependent Clp protease proteolytic subunit (200 aa).

The active-site Nucleophile is the Ser96. Residue His121 is part of the active site.

This sequence belongs to the peptidase S14 family. In terms of assembly, fourteen ClpP subunits assemble into 2 heptameric rings which stack back to back to give a disk-like structure with a central cavity, resembling the structure of eukaryotic proteasomes.

The protein resides in the cytoplasm. The enzyme catalyses Hydrolysis of proteins to small peptides in the presence of ATP and magnesium. alpha-casein is the usual test substrate. In the absence of ATP, only oligopeptides shorter than five residues are hydrolyzed (such as succinyl-Leu-Tyr-|-NHMec, and Leu-Tyr-Leu-|-Tyr-Trp, in which cleavage of the -Tyr-|-Leu- and -Tyr-|-Trp bonds also occurs).. Its function is as follows. Cleaves peptides in various proteins in a process that requires ATP hydrolysis. Has a chymotrypsin-like activity. Plays a major role in the degradation of misfolded proteins. This is ATP-dependent Clp protease proteolytic subunit from Leuconostoc citreum (strain KM20).